Reading from the N-terminus, the 419-residue chain is MSFIPVAEDSDFPIQNLPYGVFSTQSNPKPRIGVAIGDQILDLSVIKHLFTGPVLSKHQHVFDETTLNSFMGLGQAAWKEARASLQNLLSASQAQLRDDKELRQRAFTSQASATMHLPATIGDYTDFYSSLQHATNVGIMFRGKENALLPNWLHLPVGYHGRASSVVVSGTPIRRPMGQMRPDNSKPPVYGASKRLDMELEMAFFVGPGNRFGEPIPISKAQEHIFGMVLMNDWSARDIQQWEYVPLGPFLGKSFGTTISPWVVPMDALMPFVVPNPKQDPKPLPYLCHSQPYTFDINLSVALKGEGMSQAATICRSNFKHMYWTILQQLTHHSVNGCNLRPGDLLASGTISGSDPESFGSMLELSWKGTKAIDVGQGQTRTFLLDGDEVIITGHCQGDGYRVGFGQCAGKVLPALSPA.

An N-acetylserine modification is found at Ser-2. Ser-84 and Ser-92 each carry phosphoserine. Asp-126 contributes to the Ca(2+) binding site. Tyr-128 is a binding site for substrate. The active-site Proton acceptor is the His-133. Arg-142 serves as a coordination point for substrate. 3 residues coordinate Ca(2+): Glu-199, Glu-201, and Asp-233. Asp-233 is a binding site for Mg(2+). 2 residues coordinate substrate: Gln-240 and Tyr-244. Lys-253 and Thr-257 together coordinate Mg(2+). Ser-309 carries the phosphoserine modification. Residue Thr-350 coordinates substrate. Ser-417 is modified (phosphoserine).

Belongs to the FAH family. In terms of assembly, homodimer. It depends on Ca(2+) as a cofactor. Requires Mg(2+) as cofactor. Mainly in liver and kidney.

The catalysed reaction is 4-fumarylacetoacetate + H2O = acetoacetate + fumarate + H(+). It participates in amino-acid degradation; L-phenylalanine degradation; acetoacetate and fumarate from L-phenylalanine: step 6/6. This is Fumarylacetoacetase (Fah) from Rattus norvegicus (Rat).